Here is a 128-residue protein sequence, read N- to C-terminus: Large ribosomal subunit protein mL51 (128 aa).

A mitochondrion-targeting transit peptide spans 1–31 (MAGSVPWAASRRLWGWVPSACRSFSLGVPRL).

The protein belongs to the mitochondrion-specific ribosomal protein mL51 family. As to quaternary structure, component of the mitochondrial ribosome large subunit (39S) which comprises a 16S rRNA and about 50 distinct proteins. Interacts with OXA1L.

The protein localises to the mitochondrion. This chain is Large ribosomal subunit protein mL51 (Mrpl51), found in Mus musculus (Mouse).